We begin with the raw amino-acid sequence, 443 residues long: POU domain, class 3, transcription factor 3-B (443 aa).

Disordered regions lie at residues 21 to 40, 100 to 150, and 182 to 244; these read IVHSDSGGGMQQGSAAVTSV, SPWS…AGAW, and NGML…PTSD. Residues 101–121 are compositionally biased toward polar residues; the sequence is PWSSSPVGMTGSPQQQDVKNN. Residues 210 to 225 show a composition bias toward basic residues; the sequence is SHHHHHHHQHQHHQQA. The region spanning 238–312 is the POU-specific domain; that stretch reads EDTPTSDDLE…LLNKWLEEAD (75 aa). Position 317 is a phosphoserine (Ser317). The segment at residues 330–389 is a DNA-binding region (homeobox); that stretch reads KRKKRTSIEVSVKGALESHFLKCPKPSAQEITSLADNLQLEKEVVRVWFCNRRQKEKRMT.

This sequence belongs to the POU transcription factor family. Class-3 subfamily. In terms of tissue distribution, predominantly expressed in the central nervous system.

The protein localises to the nucleus. In terms of biological role, transcription factor that may play important roles in patterning the embryonic brain. This chain is POU domain, class 3, transcription factor 3-B (pou3f3b), found in Danio rerio (Zebrafish).